Reading from the N-terminus, the 91-residue chain is Small ribosomal subunit protein bS6 (91 aa).

The protein belongs to the bacterial ribosomal protein bS6 family.

Binds together with bS18 to 16S ribosomal RNA. The sequence is that of Small ribosomal subunit protein bS6 from Leptospira interrogans serogroup Icterohaemorrhagiae serovar copenhageni (strain Fiocruz L1-130).